Reading from the N-terminus, the 586-residue chain is Eukaryotic translation initiation factor 3 subunit D (586 aa).

Residues 102–176 (SAKRTFGRGG…DKPQRTREPS (75 aa)) form a disordered region. Basic and acidic residues predominate over residues 162-174 (GWKDYDKPQRTRE). Positions 301–315 (SLDLVTVNENAADAP) are RNA gate. Positions 567 to 586 (EEEEEVAAEEQEAAEEEAEE) are disordered.

This sequence belongs to the eIF-3 subunit D family. In terms of assembly, component of the eukaryotic translation initiation factor 3 (eIF-3) complex.

It is found in the cytoplasm. Functionally, mRNA cap-binding component of the eukaryotic translation initiation factor 3 (eIF-3) complex, which is involved in protein synthesis of a specialized repertoire of mRNAs and, together with other initiation factors, stimulates binding of mRNA and methionyl-tRNAi to the 40S ribosome. The eIF-3 complex specifically targets and initiates translation of a subset of mRNAs involved in cell proliferation. In the eIF-3 complex, eif3d specifically recognizes and binds the 7-methylguanosine cap of a subset of mRNAs. The sequence is that of Eukaryotic translation initiation factor 3 subunit D from Aspergillus niger (strain ATCC MYA-4892 / CBS 513.88 / FGSC A1513).